We begin with the raw amino-acid sequence, 116 residues long: Large ribosomal subunit protein bL19 (116 aa).

It belongs to the bacterial ribosomal protein bL19 family.

In terms of biological role, this protein is located at the 30S-50S ribosomal subunit interface and may play a role in the structure and function of the aminoacyl-tRNA binding site. The sequence is that of Large ribosomal subunit protein bL19 from Staphylococcus haemolyticus (strain JCSC1435).